The sequence spans 343 residues: Endoglucanase C (343 aa).

The Proton donor role is filled by E140. E280 acts as the Nucleophile in catalysis.

Belongs to the glycosyl hydrolase 5 (cellulase A) family.

It catalyses the reaction Endohydrolysis of (1-&gt;4)-beta-D-glucosidic linkages in cellulose, lichenin and cereal beta-D-glucans.. It participates in glycan metabolism; cellulose degradation. In terms of biological role, this enzyme catalyzes the endohydrolysis of 1,4-beta-glucosidic linkages in cellulose, lichenin and cereal beta-D-glucans. This chain is Endoglucanase C (celC), found in Acetivibrio thermocellus (Hungateiclostridium thermocellum).